The following is a 536-amino-acid chain: Heparanase (536 aa).

A signal peptide spans 1–28; that stretch reads MLRPLLLLWLWGRLGALTQGTPAGTAPT. Residues 55-57 and threonine 90 each bind heparan sulfate group; that span reads DAS. The propeptide at 103-150 is linker peptide; that stretch reads PTSEERSYWQSQDNNDICGSERVSADVLRKLQMEWPFQELLLLREQYQ. The cysteines at positions 120 and 172 are disulfide-linked. 151–155 contacts heparan sulfate group; that stretch reads REFKN. 3 N-linked (GlcNAc...) asparagine glycosylation sites follow: asparagine 155, asparagine 193, and asparagine 210. Glutamate 218 (proton donor) is an active-site residue. Heparan sulfate group-binding positions include 263–273, histidine 289, and arginine 296; that span reads QPRGKTVKLLR. The interval 281 to 410 is required for heterodimerization with the heparanase 8 kDa subunit; it reads EVIDSLTWHH…LLFKKLVGPK (130 aa). Catalysis depends on glutamate 336, which acts as the Nucleophile. Heparan sulfate group is bound by residues 341-343 and 382-384; these read YGG and GNY. Cysteine 430 and cysteine 535 are oxidised to a cystine. Asparagine 452 carries N-linked (GlcNAc...) asparagine glycosylation. The tract at residues 520–536 is required for transferring proheparanase to the Golgi apparatus, secretion and subsequent enzyme activity and for enhancement of PKB/AKT1 phosphorylation; that stretch reads FSYGFFVIRNAKIAACI.

Belongs to the glycosyl hydrolase 79 family. As to quaternary structure, heterodimer; heterodimer formation between the 8 kDa and the 50 kDa subunits is required for enzyme activity. Interacts with TF; the interaction, inhibited by heparin, enhances the generation of activated factor X and activates coagulation. Interacts with HRG; the interaction is enhanced at acidic pH, partially inhibits binding of HPSE to cell surface receptors and modulates its enzymatic activity. Interacts with SDC1; the interaction enhances the shedding of SDC1. Interacts with HPSE2. Post-translationally, proteolytically processed. The cleavage of the 65 kDa form leads to the generation of a linker peptide, and the 8 kDa and 50 kDa products. The active form, the 8/50 kDa heterodimer, is resistant to degradation. Complete removal of the linker peptide appears to be a prerequisite to the complete activation of the enzyme. N-glycosylated. Glycosylation of the 50 kDa subunit appears to be essential for its solubility.

It localises to the lysosome membrane. Its subcellular location is the secreted. The protein localises to the nucleus. The catalysed reaction is endohydrolysis of (1-&gt;4)-beta-D-glycosidic bonds of heparan sulfate chains in heparan sulfate proteoglycan.. Its activity is regulated as follows. Inhibited by laminarin sulfate and, to a lower extent, by heparin and sulfamin. Activated by calcium and magnesium. Inhibited by EDTA. Its function is as follows. Endoglycosidase that cleaves heparan sulfate proteoglycans (HSPGs) into heparan sulfate side chains and core proteoglycans. Participates in extracellular matrix (ECM) degradation and remodeling. Selectively cleaves the linkage between a glucuronic acid unit and an N-sulfo glucosamine unit carrying either a 3-O-sulfo or a 6-O-sulfo group. Can also cleave the linkage between a glucuronic acid unit and an N-sulfo glucosamine unit carrying a 2-O-sulfo group, but not linkages between a glucuronic acid unit and a 2-O-sulfated iduronic acid moiety. It is essentially inactive at neutral pH but becomes active under acidic conditions such as during tumor invasion and in inflammatory processes. Facilitates cell migration associated with metastasis, wound healing and inflammation. Enhances shedding of syndecans, and increases endothelial invasion and angiogenesis in myelomas. Acts as a procoagulant by increasing the generation of activation factor X in the presence of tissue factor and activation factor VII. Increases cell adhesion to the extracellular matrix (ECM), independent of its enzymatic activity. Induces AKT1/PKB phosphorylation via lipid rafts increasing cell mobility and invasion. Heparin increases this AKT1/PKB activation. Regulates osteogenesis. Enhances angiogenesis through up-regulation of SRC-mediated activation of VEGF. Implicated in hair follicle inner root sheath differentiation and hair homeostasis. The sequence is that of Heparanase (Hpse) from Rattus norvegicus (Rat).